The following is a 109-amino-acid chain: Flagellar hook-basal body complex protein FliE (109 aa).

Positions 1–38 (MQAIHNDKSLLSPFSELNTDNRTKREESGSTFKEQKGG) are disordered. Residues 19-38 (TDNRTKREESGSTFKEQKGG) show a composition bias toward basic and acidic residues.

It belongs to the FliE family.

It localises to the bacterial flagellum basal body. The polypeptide is Flagellar hook-basal body complex protein FliE (Helicobacter pylori (strain P12)).